The sequence spans 543 residues: Rop guanine nucleotide exchange factor 11 (543 aa).

The segment at 61–89 is disordered; the sequence is QPGKCGSVDRPSLPIGGVTPNRNDKLPRV. A PRONE domain is found at 95 to 456; the sequence is MEALIILQAA…QLTQEPTNNA (362 aa).

Interacts with ARAC4/ROP2, ARAC3/ROP, ARAC9/ROP8, PHYA and PHYB. As to expression, highly expressed in elongating regions of roots and pollen grains. Expressed in flowers, and at lower levels in leaves and stems.

It localises to the cytoplasm. Guanine-nucleotide exchange factor (GEF) that acts as an activator of Rop (Rho of plants) GTPases by promoting the exchange of GDP for GTP. Functions as a light-signaling switch that functions in root growth and development through the activation of Rop in a phytochrome-dependent manner. May act as a negative regulator of phytochrome-mediated primary root development. This chain is Rop guanine nucleotide exchange factor 11 (ROPGEF11), found in Arabidopsis thaliana (Mouse-ear cress).